We begin with the raw amino-acid sequence, 578 residues long: Putative ankyrin repeat protein FPV022 (578 aa).

ANK repeat units lie at residues 4–34, 38–67, 68–97, 100–129, 160–189, 222–251, 255–287, 320–349, 353–382, 386–415, and 419–449; these read RRKS…DLNK, KNRT…KMSA, CKVP…SVDV, KGET…SGPY, YGHT…ITDN, EGTT…DPKV, HSVS…MVNM, YLSE…NINK, YGNI…DVNA, DGNT…DINS, and NGRT…KKNK.

The protein is Putative ankyrin repeat protein FPV022 of Fowlpox virus (strain NVSL) (FPV).